Consider the following 287-residue polypeptide: NAD-dependent protein deacylase sir-2.2 (287 aa).

Residues 10–287 (AELCENSLKK…YKISDVLKEM (278 aa)) form the Deacetylase sirtuin-type domain. NAD(+) contacts are provided by residues 35–55 (GAGI…VGLY) and 116–119 (QNVD). Residue histidine 134 is the Proton acceptor of the active site. 4 residues coordinate Zn(2+): cysteine 142, cysteine 145, cysteine 196, and cysteine 199. Residues 236 to 238 (GTS), 262 to 264 (NIG), and isoleucine 280 each bind NAD(+).

It belongs to the sirtuin family. Class II subfamily. In terms of assembly, interacts with pyc-1, pcca-1 and mccc-1. Requires Zn(2+) as cofactor. Ubiquitously expressed with high expression in the pharynx, body wall muscles and gonad.

The protein localises to the mitochondrion matrix. The protein resides in the mitochondrion. It catalyses the reaction N(6)-acetyl-L-lysyl-[protein] + NAD(+) + H2O = 2''-O-acetyl-ADP-D-ribose + nicotinamide + L-lysyl-[protein]. NAD-dependent protein deacylase. Catalyzes the NAD-dependent hydrolysis of acyl groups from lysine residues. Plays a role in oxidative stress resistance. This chain is NAD-dependent protein deacylase sir-2.2 (sir-2.2), found in Caenorhabditis elegans.